The sequence spans 321 residues: Phospho-N-acetylmuramoyl-pentapeptide-transferase (321 aa).

The next 10 membrane-spanning stretches (helical) occupy residues 4–24 (MVWA…WLIP), 51–71 (TMGG…TVGF), 75–95 (SGVL…DDYI), 109–129 (QKFT…VYGI), 139–159 (GFEV…LLIV), 173–193 (GLAA…ASAG), 195–215 (SDVT…FLFF), 222–242 (MFMG…LALL), 247–267 (LILP…ILQV), and 297–317 (VVYT…LLAM).

Belongs to the glycosyltransferase 4 family. MraY subfamily. It depends on Mg(2+) as a cofactor.

The protein resides in the cell membrane. It carries out the reaction UDP-N-acetyl-alpha-D-muramoyl-L-alanyl-gamma-D-glutamyl-meso-2,6-diaminopimeloyl-D-alanyl-D-alanine + di-trans,octa-cis-undecaprenyl phosphate = di-trans,octa-cis-undecaprenyl diphospho-N-acetyl-alpha-D-muramoyl-L-alanyl-D-glutamyl-meso-2,6-diaminopimeloyl-D-alanyl-D-alanine + UMP. It functions in the pathway cell wall biogenesis; peptidoglycan biosynthesis. Its function is as follows. Catalyzes the initial step of the lipid cycle reactions in the biosynthesis of the cell wall peptidoglycan: transfers peptidoglycan precursor phospho-MurNAc-pentapeptide from UDP-MurNAc-pentapeptide onto the lipid carrier undecaprenyl phosphate, yielding undecaprenyl-pyrophosphoryl-MurNAc-pentapeptide, known as lipid I. This is Phospho-N-acetylmuramoyl-pentapeptide-transferase from Heliobacterium modesticaldum (strain ATCC 51547 / Ice1).